We begin with the raw amino-acid sequence, 212 residues long: uncharacterized protein (212 aa).

A disordered region spans residues 97 to 151; sequence SDASEAKNDDRRSDGRFALYSVSDTPETTTASRSADRSTNPKTAKHPKSAAKPTV. The segment covering 100 to 111 has biased composition (basic and acidic residues); the sequence is SEAKNDDRRSDG.

This is an uncharacterized protein from Mycobacterium tuberculosis (strain CDC 1551 / Oshkosh).